Here is a 323-residue protein sequence, read N- to C-terminus: Elongation factor P--(R)-beta-lysine ligase (323 aa).

Substrate is bound at residue 76–78 (SPE). Residues 100-102 (RNE) and N109 contribute to the ATP site. Y118 is a substrate binding site. 242–243 (EL) is a binding site for ATP. E249 serves as a coordination point for substrate. Residue G298 participates in ATP binding.

The protein belongs to the class-II aminoacyl-tRNA synthetase family. EpmA subfamily. Homodimer.

It catalyses the reaction D-beta-lysine + L-lysyl-[protein] + ATP = N(6)-((3R)-3,6-diaminohexanoyl)-L-lysyl-[protein] + AMP + diphosphate + H(+). With EpmB is involved in the beta-lysylation step of the post-translational modification of translation elongation factor P (EF-P). Catalyzes the ATP-dependent activation of (R)-beta-lysine produced by EpmB, forming a lysyl-adenylate, from which the beta-lysyl moiety is then transferred to the epsilon-amino group of a conserved specific lysine residue in EF-P. The protein is Elongation factor P--(R)-beta-lysine ligase of Mannheimia succiniciproducens (strain KCTC 0769BP / MBEL55E).